We begin with the raw amino-acid sequence, 520 residues long: GMP synthase [glutamine-hydrolyzing] (520 aa).

The 199-residue stretch at 4-202 (KILILDFGSQ…VHDICGCGSD (199 aa)) folds into the Glutamine amidotransferase type-1 domain. Cys-81 (nucleophile) is an active-site residue. Catalysis depends on residues His-176 and Glu-178. The 193-residue stretch at 203–395 (WNMPDYVEEA…LGLPHDMVYR (193 aa)) folds into the GMPS ATP-PPase domain. 230–236 (SGGVDSS) serves as a coordination point for ATP.

As to quaternary structure, homodimer.

The catalysed reaction is XMP + L-glutamine + ATP + H2O = GMP + L-glutamate + AMP + diphosphate + 2 H(+). It participates in purine metabolism; GMP biosynthesis; GMP from XMP (L-Gln route): step 1/1. In terms of biological role, catalyzes the synthesis of GMP from XMP. The sequence is that of GMP synthase [glutamine-hydrolyzing] from Thiobacillus denitrificans (strain ATCC 25259 / T1).